We begin with the raw amino-acid sequence, 297 residues long: Protein muscleblind (297 aa).

C3H1-type zinc fingers lie at residues 18–46 and 52–80; these read WLQL…HPPA and NGKV…HPPQ.

This sequence belongs to the muscleblind family. Expressed in embryonic muscle cells.

It is found in the nucleus. Required for terminal differentiation of photoreceptor cells. Vital for embryonic development. The sequence is that of Protein muscleblind (mbl) from Drosophila melanogaster (Fruit fly).